We begin with the raw amino-acid sequence, 148 residues long: uncharacterized protein (148 aa).

Over residues 1–17 (MEGLQRSTISFRRQGSS) the composition is skewed to polar residues. A disordered region spans residues 1 to 148 (MEGLQRSTIS…SRRRIVTKKR (148 aa)). Composition is skewed to basic and acidic residues over residues 36-47 (EQKDESQRDEQP) and 58-67 (KPIDEKDKLR). 2 positions are modified to phosphoserine: Ser100 and Ser107. A compositionally biased stretch (basic residues) spans 128 to 148 (VNPRKRPPKRRSRRRIVTKKR).

This is an uncharacterized protein from Arabidopsis thaliana (Mouse-ear cress).